A 424-amino-acid chain; its full sequence is Histidine--tRNA ligase (424 aa).

Belongs to the class-II aminoacyl-tRNA synthetase family. As to quaternary structure, homodimer.

Its subcellular location is the cytoplasm. It carries out the reaction tRNA(His) + L-histidine + ATP = L-histidyl-tRNA(His) + AMP + diphosphate + H(+). In Shewanella denitrificans (strain OS217 / ATCC BAA-1090 / DSM 15013), this protein is Histidine--tRNA ligase.